Consider the following 373-residue polypeptide: Valienol-1-phosphate guanylyltransferase (373 aa).

Residues G177 and 192–193 contribute to the substrate site; that span reads EK.

This sequence belongs to the bacterial/plant glucose-1-phosphate adenylyltransferase family. The cofactor is Mg(2+).

It catalyses the reaction valienol 1-phosphate + GTP + H(+) = GDP-valienol + diphosphate. Functionally, involved in the biosynthesis of the antifungal agent validamycin A. Catalyzes the conversion of valienol 1-phosphate to GDP-valienol and less effectively to ADP-valienol or other NDP derivatives. The sequence is that of Valienol-1-phosphate guanylyltransferase from Streptomyces hygroscopicus subsp. limoneus.